The primary structure comprises 542 residues: MSILALVEDRPTPKEVYNWKIYLLAAVASFTSCMIGYDSAFIGTTLALSSFREEFGFSTMSKTAVNLVSANIVSCYQAGAFFGAFFAYPIGHFWGRKWGLLFAGTIFTLGAGLMLGANGDRGLGLLYGGRVLAGLGVGAGSNITPIYISEMAPPSIRGRLVGVYELGWQIGGLVGFWINYGVSETLAPSHKQWIIPFAVQLIPSGLLLIGAVFLKESPRWLFSRGRREDAIKNLCWIRQLPADHIYMIEEIGAVDQALEEQRTTIGLGFWKPFKAAGTNKKVMYRLFLGSMLFFWQNGSGINAINYYSPTVFKSIGLHGANTSMFSTGIFGVVKTVVTFVWLLYLIDRLGRRLLLLIGAAGAAVCLLIVGAYIKIADPASNPTQEMTGGGIAAMFFFYLYTVFYTPSWNGTPWVMNSEMFEPNMRSLAQACAAASNWLWNFLISRFTPQMFAKMEYGVWFFFASLMLLSIVFVFFLVPETKGIPLESMDVLFESKPIWRAHATVLAKLREDEEQFRHDIEESGYSKTGEQQVEHVSEDLPKV.

The Cytoplasmic portion of the chain corresponds to 1–22 (MSILALVEDRPTPKEVYNWKIY). Residues 23-43 (LLAAVASFTSCMIGYDSAFIG) form a helical membrane-spanning segment. Over 44 to 74 (TTLALSSFREEFGFSTMSKTAVNLVSANIVS) the chain is Extracellular. Residues 75–95 (CYQAGAFFGAFFAYPIGHFWG) traverse the membrane as a helical segment. Topologically, residues 96-97 (RK) are cytoplasmic. Residues 98–118 (WGLLFAGTIFTLGAGLMLGAN) form a helical membrane-spanning segment. The Extracellular portion of the chain corresponds to 119–130 (GDRGLGLLYGGR). A helical membrane pass occupies residues 131 to 151 (VLAGLGVGAGSNITPIYISEM). Residues 152 to 159 (APPSIRGR) lie on the Cytoplasmic side of the membrane. The helical transmembrane segment at 160–180 (LVGVYELGWQIGGLVGFWINY) threads the bilayer. The Extracellular portion of the chain corresponds to 181–193 (GVSETLAPSHKQW). The chain crosses the membrane as a helical span at residues 194 to 214 (IIPFAVQLIPSGLLLIGAVFL). At 215–285 (KESPRWLFSR…AGTNKKVMYR (71 aa)) the chain is on the cytoplasmic side. Residues 286–306 (LFLGSMLFFWQNGSGINAINY) traverse the membrane as a helical segment. Residues 307–325 (YSPTVFKSIGLHGANTSMF) lie on the Extracellular side of the membrane. Residues 326–346 (STGIFGVVKTVVTFVWLLYLI) traverse the membrane as a helical segment. The Cytoplasmic segment spans residues 347 to 352 (DRLGRR). A helical membrane pass occupies residues 353 to 373 (LLLLIGAAGAAVCLLIVGAYI). The Extracellular segment spans residues 374–387 (KIADPASNPTQEMT). The chain crosses the membrane as a helical span at residues 388 to 408 (GGGIAAMFFFYLYTVFYTPSW). Topologically, residues 409 to 456 (NGTPWVMNSEMFEPNMRSLAQACAAASNWLWNFLISRFTPQMFAKMEY) are cytoplasmic. The chain crosses the membrane as a helical span at residues 457–477 (GVWFFFASLMLLSIVFVFFLV). The Extracellular segment spans residues 478 to 542 (PETKGIPLES…EHVSEDLPKV (65 aa)). The segment at 523-542 (GYSKTGEQQVEHVSEDLPKV) is disordered. Residues 531-542 (QVEHVSEDLPKV) show a composition bias toward basic and acidic residues.

Belongs to the major facilitator superfamily. Sugar transporter (TC 2.A.1.1) family. Interacts with creB. In terms of processing, ubiquitinated. Deubiquitinated by creB, probably to control its activity or amount.

It is found in the cell membrane. In terms of biological role, integral membrane transporter that imports quinic acid to be catabolized as a carbon source. This Aspergillus fumigatus (strain CBS 144.89 / FGSC A1163 / CEA10) (Neosartorya fumigata) protein is Probable quinate permease (qutD).